A 392-amino-acid chain; its full sequence is Tryptophan synthase beta chain (392 aa).

Lysine 86 bears the N6-(pyridoxal phosphate)lysine mark.

This sequence belongs to the TrpB family. Tetramer of two alpha and two beta chains. Requires pyridoxal 5'-phosphate as cofactor.

The enzyme catalyses (1S,2R)-1-C-(indol-3-yl)glycerol 3-phosphate + L-serine = D-glyceraldehyde 3-phosphate + L-tryptophan + H2O. It functions in the pathway amino-acid biosynthesis; L-tryptophan biosynthesis; L-tryptophan from chorismate: step 5/5. Functionally, the beta subunit is responsible for the synthesis of L-tryptophan from indole and L-serine. The polypeptide is Tryptophan synthase beta chain (trpB) (Buchnera aphidicola subsp. Melaphis rhois).